Consider the following 611-residue polypeptide: DNA mismatch repair protein MutL (611 aa).

Belongs to the DNA mismatch repair MutL/HexB family.

Its function is as follows. This protein is involved in the repair of mismatches in DNA. It is required for dam-dependent methyl-directed DNA mismatch repair. May act as a 'molecular matchmaker', a protein that promotes the formation of a stable complex between two or more DNA-binding proteins in an ATP-dependent manner without itself being part of a final effector complex. The sequence is that of DNA mismatch repair protein MutL from Rickettsia bellii (strain RML369-C).